The primary structure comprises 319 residues: Annexin A4 (319 aa).

Ala2 carries the post-translational modification N-acetylalanine. Position 7 is a phosphothreonine (Thr7). The residue at position 12 (Ser12) is a Phosphoserine. Annexin repeat units lie at residues 14 to 85 (FSAT…GMIT), 86 to 157 (PTVL…SLSA), 169 to 241 (ALMR…AIVK), and 245 to 316 (NKSA…ILCG). Lys213, Lys293, and Lys300 each carry N6-acetyllysine.

The protein belongs to the annexin family. Expressed in pancreas (at protein level). Also detected in liver, spleen, intestine, stomach, kidney, and adrenal glands.

Its subcellular location is the zymogen granule membrane. Calcium/phospholipid-binding protein which promotes membrane fusion and is involved in exocytosis. This chain is Annexin A4 (ANXA4), found in Canis lupus familiaris (Dog).